A 161-amino-acid chain; its full sequence is Transcriptional repressor NrdR (161 aa).

Residues 3–34 fold into a zinc finger; that stretch reads CPSCQHTDSRVLESRAADSGKSVRRRRECLNC. The region spanning 49–139 is the ATP-cone domain; that stretch reads ITVVKRSGTR…VYGKFSGISD (91 aa).

This sequence belongs to the NrdR family. Zn(2+) serves as cofactor.

Its function is as follows. Negatively regulates transcription of bacterial ribonucleotide reductase nrd genes and operons by binding to NrdR-boxes. This is Transcriptional repressor NrdR from Synechococcus sp. (strain RCC307).